Here is a 504-residue protein sequence, read N- to C-terminus: Maturase K (504 aa).

This sequence belongs to the intron maturase 2 family. MatK subfamily.

It localises to the plastid. The protein localises to the chloroplast. Functionally, usually encoded in the trnK tRNA gene intron. Probably assists in splicing its own and other chloroplast group II introns. This is Maturase K from Bombax buonopozense (Red-flowered silk cotton tree).